The primary structure comprises 239 residues: Purine nucleoside phosphorylase DeoD-type (239 aa).

A purine D-ribonucleoside is bound at residue His5. Gly21 and Arg25 together coordinate phosphate. Position 27 is an N6-acetyllysine (Lys27). Residues Arg44 and 88-91 (RVGS) contribute to the phosphate site. A purine D-ribonucleoside-binding positions include 180–182 (EME) and 204–205 (SD). Asp205 functions as the Proton donor in the catalytic mechanism.

Belongs to the PNP/UDP phosphorylase family. Homohexamer; trimer of homodimers.

It catalyses the reaction a purine D-ribonucleoside + phosphate = a purine nucleobase + alpha-D-ribose 1-phosphate. The enzyme catalyses a purine 2'-deoxy-D-ribonucleoside + phosphate = a purine nucleobase + 2-deoxy-alpha-D-ribose 1-phosphate. Functionally, catalyzes the reversible phosphorolytic breakdown of the N-glycosidic bond in the beta-(deoxy)ribonucleoside molecules, with the formation of the corresponding free purine bases and pentose-1-phosphate. This chain is Purine nucleoside phosphorylase DeoD-type, found in Shigella dysenteriae serotype 1 (strain Sd197).